The sequence spans 475 residues: Ribulose bisphosphate carboxylase large chain (475 aa).

Positions 1–2 (MA) are excised as a propeptide. An N-acetylproline modification is found at Pro3. The residue at position 14 (Lys14) is an N6,N6,N6-trimethyllysine. Substrate-binding residues include Asn123 and Thr173. The active-site Proton acceptor is the Lys175. Lys177 contacts substrate. Mg(2+) is bound by residues Lys201, Asp203, and Glu204. Lys201 bears the N6-carboxylysine mark. His294 (proton acceptor) is an active-site residue. Arg295, His327, and Ser379 together coordinate substrate.

This sequence belongs to the RuBisCO large chain family. Type I subfamily. In terms of assembly, heterohexadecamer of 8 large chains and 8 small chains; disulfide-linked. The disulfide link is formed within the large subunit homodimers. Requires Mg(2+) as cofactor. The disulfide bond which can form in the large chain dimeric partners within the hexadecamer appears to be associated with oxidative stress and protein turnover.

Its subcellular location is the plastid. The protein localises to the chloroplast. It catalyses the reaction 2 (2R)-3-phosphoglycerate + 2 H(+) = D-ribulose 1,5-bisphosphate + CO2 + H2O. The enzyme catalyses D-ribulose 1,5-bisphosphate + O2 = 2-phosphoglycolate + (2R)-3-phosphoglycerate + 2 H(+). Its function is as follows. RuBisCO catalyzes two reactions: the carboxylation of D-ribulose 1,5-bisphosphate, the primary event in carbon dioxide fixation, as well as the oxidative fragmentation of the pentose substrate in the photorespiration process. Both reactions occur simultaneously and in competition at the same active site. The sequence is that of Ribulose bisphosphate carboxylase large chain from Bryopsis maxima (Green alga).